A 441-amino-acid polypeptide reads, in one-letter code: ATP-dependent RNA helicase sub2 (441 aa).

Residues 23–32 (TTAAPAANGD) are compositionally biased toward low complexity. Residues 23-42 (TTAAPAANGDAAKKGDLTVS) are disordered. The short motif at 58 to 86 (TGFRDFLLKGELLRAITDCGFEHPSEVQQ) is the Q motif element. Positions 89–264 (IPTAILNVDV…KKFMRNPLEV (176 aa)) constitute a Helicase ATP-binding domain. 102–109 (AKSGLGKT) lines the ATP pocket. Positions 211 to 214 (DECD) match the DECD box motif. Positions 292-437 (KLNELLDSLE…EYPEGGVDSS (146 aa)) constitute a Helicase C-terminal domain.

The protein belongs to the DEAD box helicase family. DECD subfamily.

Its subcellular location is the nucleus. It catalyses the reaction ATP + H2O = ADP + phosphate + H(+). Functionally, ATP-binding RNA helicase involved in transcription elongation and required for the export of mRNA out of the nucleus. SUB2 also plays a role in pre-mRNA splicing and spliceosome assembly. May be involved in rDNA and telomeric silencing, and maintenance of genome integrity. In Aspergillus oryzae (strain ATCC 42149 / RIB 40) (Yellow koji mold), this protein is ATP-dependent RNA helicase sub2 (sub2).